Reading from the N-terminus, the 161-residue chain is Ribosome maturation factor RimP (161 aa).

It belongs to the RimP family.

Its subcellular location is the cytoplasm. Required for maturation of 30S ribosomal subunits. The protein is Ribosome maturation factor RimP of Janthinobacterium sp. (strain Marseille) (Minibacterium massiliensis).